The primary structure comprises 358 residues: Probable (S)-tetrahydroprotoberberine N-methyltransferase 2 (358 aa).

Residues S98, G136, N160, Q164, D186, V187, and I202 each coordinate S-adenosyl-L-methionine. C333 is an active-site residue.

It belongs to the CFA/CMAS family. Homodimer.

It localises to the cytoplasm. The catalysed reaction is (S)-stylopine + S-adenosyl-L-methionine = (S)-cis-N-methylstylopine + S-adenosyl-L-homocysteine. It carries out the reaction (S)-tetrahydropalmatine + S-adenosyl-L-methionine = (S)-cis-N-methyltetrahydropalmatine + S-adenosyl-L-homocysteine. It participates in alkaloid biosynthesis. Functionally, N-methyltransferase with a strict substrate specificity for (R,S)-tetrahydropalmatine or (R,S)-stylopine. This chain is Probable (S)-tetrahydroprotoberberine N-methyltransferase 2, found in Papaver bracteatum (Great scarlet poppy).